The sequence spans 429 residues: 3-phosphoshikimate 1-carboxyvinyltransferase (429 aa).

The 3-phosphoshikimate site is built by Lys-23, Ser-24, and Arg-28. Phosphoenolpyruvate is bound at residue Lys-23. Phosphoenolpyruvate is bound by residues Gly-94 and Arg-126. 7 residues coordinate 3-phosphoshikimate: Ser-171, Ser-172, Gln-173, Ser-199, Asp-316, Asn-339, and Lys-343. Phosphoenolpyruvate is bound at residue Gln-173. Asp-316 functions as the Proton acceptor in the catalytic mechanism. Phosphoenolpyruvate-binding residues include Arg-347, Arg-389, and Lys-414.

This sequence belongs to the EPSP synthase family. Monomer.

The protein localises to the cytoplasm. It catalyses the reaction 3-phosphoshikimate + phosphoenolpyruvate = 5-O-(1-carboxyvinyl)-3-phosphoshikimate + phosphate. It participates in metabolic intermediate biosynthesis; chorismate biosynthesis; chorismate from D-erythrose 4-phosphate and phosphoenolpyruvate: step 6/7. Functionally, catalyzes the transfer of the enolpyruvyl moiety of phosphoenolpyruvate (PEP) to the 5-hydroxyl of shikimate-3-phosphate (S3P) to produce enolpyruvyl shikimate-3-phosphate and inorganic phosphate. The polypeptide is 3-phosphoshikimate 1-carboxyvinyltransferase (Idiomarina loihiensis (strain ATCC BAA-735 / DSM 15497 / L2-TR)).